Reading from the N-terminus, the 61-residue chain is Small ribosomal subunit protein uS14 (61 aa).

Zn(2+) contacts are provided by cysteine 24, cysteine 27, cysteine 40, and cysteine 43.

This sequence belongs to the universal ribosomal protein uS14 family. Zinc-binding uS14 subfamily. In terms of assembly, part of the 30S ribosomal subunit. Contacts proteins S3 and S10. The cofactor is Zn(2+).

Functionally, binds 16S rRNA, required for the assembly of 30S particles and may also be responsible for determining the conformation of the 16S rRNA at the A site. This chain is Small ribosomal subunit protein uS14, found in Clostridium botulinum (strain Alaska E43 / Type E3).